The following is a 524-amino-acid chain: Cytochrome P450 704B1 (524 aa).

The chain crosses the membrane as a helical span at residues 2–22; it reads SLCLVIACMVTSWIFLHRWGQ. C471 provides a ligand contact to heme.

Belongs to the cytochrome P450 family. It depends on heme as a cofactor.

It is found in the membrane. It catalyses the reaction an omega-methyl-long-chain fatty acid + reduced [NADPH--hemoprotein reductase] + O2 = an omega-hydroxy-long-chain fatty acid + oxidized [NADPH--hemoprotein reductase] + H2O + H(+). Functionally, involved in pollen wall development. Catalyzes the conversion of long-chain fatty acids to the corresponding omega-hydroxylated fatty acids. Omega-hydroxylated fatty acids, together with in-chain hydroxylated fatty acids, are key monomeric aliphatic building blocks for sporopollenin synthesis during exine formation. This is Cytochrome P450 704B1 (CYP704B1) from Arabidopsis thaliana (Mouse-ear cress).